The sequence spans 762 residues: Probable inorganic carbon transporter subunit DabA (762 aa).

4 residues coordinate Zn(2+): C279, D281, H461, and C476.

Belongs to the inorganic carbon transporter (TC 9.A.2) DabA family. In terms of assembly, forms a complex with DabB. Requires Zn(2+) as cofactor.

It is found in the cell inner membrane. Its function is as follows. Part of an energy-coupled inorganic carbon pump. The polypeptide is Probable inorganic carbon transporter subunit DabA (Legionella pneumophila subsp. pneumophila (strain Philadelphia 1 / ATCC 33152 / DSM 7513)).